Reading from the N-terminus, the 631-residue chain is Cyclic nucleotide-gated channel alpha-3 (631 aa).

Residues 1 to 18 show a composition bias toward polar residues; sequence MAKVNTQCSQPSPTQLSI. 2 disordered regions span residues 1-21 and 71-98; these read MAKV…IKNA and EVST…RKEE. The Cytoplasmic portion of the chain corresponds to 1-111; the sequence is MAKVNTQCSQ…VDPSSNIYYR (111 aa). Positions 87–98 are enriched in basic and acidic residues; it reads KPPDGGEGRKEE. Residues 112–133 traverse the membrane as a helical segment; it reads WLTAIALPVFYNWCLLVCRACF. Residues 134–139 lie on the Extracellular side of the membrane; that stretch reads DELQSE. A helical membrane pass occupies residues 140–160; the sequence is HLTLWLVLDYSADVLYVLDML. Over 161–187 the chain is Cytoplasmic; it reads VRARTGFLEQGLMVRDTKRLWKHYTKT. A helical transmembrane segment spans residues 188 to 207; the sequence is LHFKLDILSLIPTDLAYLKL. Topologically, residues 208–211 are extracellular; that stretch reads GVNY. A helical transmembrane segment spans residues 212-229; it reads PELRFNRLLKFSRLFEFF. Topologically, residues 230 to 239 are cytoplasmic; that stretch reads DRTETRTNYP. The tract at residues 239 to 347 is ion conduction pathway; the sequence is PNVFRIGNLV…GNVGSMISNM (109 aa). The helical transmembrane segment at 240–262 threads the bilayer; sequence NVFRIGNLVLYTLIIIHWNACIY. Residues 263 to 288 lie on the Extracellular side of the membrane; that stretch reads FAISKFIGFGTDSWVYPNTSKPEYAR. Asn-280 is a glycosylation site (N-linked (GalNAc...) asparagine). 2 consecutive transmembrane segments (helical) span residues 289-319 and 320-344; these read LSRK…DEEY and LFVV…GSMI. A selectivity filter region spans residues 306 to 309; that stretch reads TIGE. Residues 345-631 lie on the Cytoplasmic side of the membrane; it reads SNMNAPRVEF…ENSEDASKTD (287 aa). The segment at 349–426 is C-linker; that stretch reads APRVEFQAKI…TLKKVRIFQD (78 aa). Residues 429–549 are cyclic nucleotide-binding domain; that stretch reads AGLLVELVLK…EEKGRQILMK (121 aa). Residues Gly-489, Glu-490, Ser-492, Arg-505, Thr-506, and Asp-550 each coordinate 3',5'-cyclic GMP. The stretch at 567–610 forms a coiled coil; that stretch reads VEEKVEYLESSLDILQTRFARLLAEYSASQMKLKQRLTRLESQM.

It belongs to the cyclic nucleotide-gated cation channel (TC 1.A.1.5) family. CNGA3 subfamily. Forms heterotetrameric channels composed of CNGA3 and CNGB3 subunits with 3:1 stoichiometry. In terms of tissue distribution, prominently expressed in retina.

It is found in the cell membrane. The catalysed reaction is Ca(2+)(in) = Ca(2+)(out). It carries out the reaction Na(+)(in) = Na(+)(out). The enzyme catalyses K(+)(in) = K(+)(out). It catalyses the reaction NH4(+)(in) = NH4(+)(out). The catalysed reaction is Rb(+)(in) = Rb(+)(out). It carries out the reaction Li(+)(in) = Li(+)(out). The enzyme catalyses Cs(+)(in) = Cs(+)(out). Pore-forming subunit of the cone cyclic nucleotide-gated channel. Mediates cone photoresponses at bright light converting transient changes in intracellular cGMP levels into electrical signals. In the dark, cGMP levels are high and keep the channel open enabling a steady inward current carried by Na(+) and Ca(2+) ions that leads to membrane depolarization and neurotransmitter release from synaptic terminals. Upon photon absorption cGMP levels decline leading to channel closure and membrane hyperpolarization that ultimately slows neurotransmitter release and signals the presence of light, the end point of the phototransduction cascade. Pore-forming subunit of the gustatory cyclic nucleotide-gated channel. In the taste buds, may sense oral extracellular pH and conduct ion currents that modulate the excitability of taste cells. Conducts cGMP- and cAMP-gated ion currents, with permeability for monovalent and divalent cations. This is Cyclic nucleotide-gated channel alpha-3 from Mus musculus (Mouse).